Here is a 462-residue protein sequence, read N- to C-terminus: CUGBP Elav-like family member 3-B (462 aa).

3 RRM domains span residues 7–88, 95–175, and 377–455; these read IKLF…PADS, RKLF…FADT, and CNIF…LKRP.

This sequence belongs to the CELF/BRUNOL family.

Its subcellular location is the nucleus. It is found in the cytoplasm. Functionally, RNA-binding protein that may be involved in the regulation of pre-mRNA alternative splicing. The sequence is that of CUGBP Elav-like family member 3-B (tnrc4-b) from Xenopus laevis (African clawed frog).